A 40-amino-acid polypeptide reads, in one-letter code: Photosystem II reaction center protein J (40 aa).

A helical membrane pass occupies residues 8-28 (IPLWLISTVTGTLVIGLMGIF).

This sequence belongs to the PsbJ family. As to quaternary structure, PSII is composed of 1 copy each of membrane proteins PsbA, PsbB, PsbC, PsbD, PsbE, PsbF, PsbH, PsbI, PsbJ, PsbK, PsbL, PsbM, PsbT, PsbX, PsbY, PsbZ, Psb30/Ycf12, at least 3 peripheral proteins of the oxygen-evolving complex and a large number of cofactors. It forms dimeric complexes.

The protein localises to the plastid. Its subcellular location is the chloroplast thylakoid membrane. Its function is as follows. One of the components of the core complex of photosystem II (PSII). PSII is a light-driven water:plastoquinone oxidoreductase that uses light energy to abstract electrons from H(2)O, generating O(2) and a proton gradient subsequently used for ATP formation. It consists of a core antenna complex that captures photons, and an electron transfer chain that converts photonic excitation into a charge separation. This Ginkgo biloba (Ginkgo) protein is Photosystem II reaction center protein J.